The sequence spans 447 residues: N-succinylarginine dihydrolase (447 aa).

Substrate-binding positions include Ala-19–Ser-28, Asn-110, and His-137–Arg-138. Glu-174 is an active-site residue. Arg-212 contacts substrate. The active site involves His-248. Residues Asp-250 and Asn-359 each coordinate substrate. Catalysis depends on Cys-365, which acts as the Nucleophile.

The protein belongs to the succinylarginine dihydrolase family. As to quaternary structure, homodimer.

It catalyses the reaction N(2)-succinyl-L-arginine + 2 H2O + 2 H(+) = N(2)-succinyl-L-ornithine + 2 NH4(+) + CO2. It functions in the pathway amino-acid degradation; L-arginine degradation via AST pathway; L-glutamate and succinate from L-arginine: step 2/5. Its function is as follows. Catalyzes the hydrolysis of N(2)-succinylarginine into N(2)-succinylornithine, ammonia and CO(2). In Escherichia coli O17:K52:H18 (strain UMN026 / ExPEC), this protein is N-succinylarginine dihydrolase.